The primary structure comprises 413 residues: Intracellular hyaluronan-binding protein 4 (413 aa).

Phosphoserine occurs at positions 7 and 36. A coiled-coil region spans residues 40-64; the sequence is DILREAERRRQQQLQRKRRDEAAAA. The interval 42-206 is disordered; that stretch reads LREAERRRQQ…RGGPGNRVFD (165 aa). A compositionally biased stretch (low complexity) spans 62-82; sequence AAAAGAGPRGGRSPAGASGHR. An Omega-N-methylarginine modification is found at arginine 70. Position 74 is a phosphoserine (serine 74). The span at 87-97 shows a compositional bias: basic and acidic residues; sequence GRRESQKERKS. Serine 108 is modified (phosphoserine). The span at 139 to 182 shows a compositional bias: basic and acidic residues; the sequence is MLERAERRSYREYRPYETERQADFTAEKFPDEKPGDRFDRDRPL. Residues 184–201 show a composition bias toward gly residues; sequence GRGGPRGGMRGRGRGGPG. Glycyl lysine isopeptide (Lys-Gly) (interchain with G-Cter in SUMO1); alternate cross-links involve residues lysine 213 and lysine 276. Residues lysine 213 and lysine 276 each participate in a glycyl lysine isopeptide (Lys-Gly) (interchain with G-Cter in SUMO2); alternate cross-link. A disordered region spans residues 227-320; that stretch reads VRTEDNMGGC…IRKPESTVPS (94 aa). Basic and acidic residues predominate over residues 294–315; sequence DEWKNLQEQTRPKPEFNIRKPE. Residue lysine 336 forms a Glycyl lysine isopeptide (Lys-Gly) (interchain with G-Cter in SUMO1); alternate linkage. Lysine 336 participates in a covalent cross-link: Glycyl lysine isopeptide (Lys-Gly) (interchain with G-Cter in SUMO2); alternate. Phosphothreonine; by PKC occurs at positions 354 and 375. Positions 360–413 are disordered; the sequence is NFGNLPRPGRGARGGTRGGRGRIRRAENYGPRAEVVMQDVAPNPDDPEDFPALS. Acidic residues predominate over residues 404–413; the sequence is DDPEDFPALS.

The protein belongs to the SERBP1-HABP4 family. Associates with ribosomes; promoting ribosome stabilization. Interacts with EEF2/eEF2; promoting ribosome stabilization. Interacts with FMR1. Interacts with FXR1 and FXR2. Interacts with CHD3 (via C-terminus). Interacts (via C-terminus) with RACK1. Interacts with p53/TP53. Interacts (via N-terminus) with SRSF9; this interaction is direct. Interacts with SYNCRIP; this interaction is direct. Interacts with MEF2C (via N-terminus); this interaction decreases DNA-binding activity of MEF2C in myocardial cells in response to mechanical stress. Interacts with PRMT1 (via N-terminus). Interacts with SPIN1. Methylated. Methylation is decreased by phorbol 12-myristate 13-acetate (PMA)-activated PKC, in vitro. Post-translationally, phosphorylated by phorbol 12-myristate 13-acetate (PMA)-activated PKC isoforms at Thr-354 and Thr-375. As to expression, highly expressed in brain, heart, and kidney, and moderately expressed in skeletal muscle. Also expressed in a variety of tumor cell lines and in activated but not resting leukocytes.

It is found in the nucleus. The protein localises to the cytoplasm. Its subcellular location is the stress granule. The protein resides in the sarcoplasm. It localises to the nuclear body. It is found in the nucleolus. The protein localises to the nucleus speckle. Its subcellular location is the cajal body. The protein resides in the gem. Functionally, ribosome-binding protein that promotes ribosome hibernation, a process during which ribosomes are stabilized in an inactive state and preserved from proteasomal degradation. Acts via its association with EEF2/eEF2 factor at the A-site of the ribosome, promoting ribosome stabilization in an inactive state compatible with storage. Plays a key role in ribosome hibernation in the mature oocyte by promoting ribosome stabilization. Ribosomes, which are produced in large quantities during oogenesis, are stored and translationally repressed in the oocyte and early embryo. Also binds RNA, regulating transcription and pre-mRNA splicing. Binds (via C-terminus) to poly(U) RNA. Seems to play a role in PML-nuclear bodies formation. Negatively regulates DNA-binding activity of the transcription factor MEF2C in myocardial cells in response to mechanical stress. The protein is Intracellular hyaluronan-binding protein 4 of Homo sapiens (Human).